The chain runs to 405 residues: Argininosuccinate synthase (405 aa).

11–19 (AYSGGLDTS) is an ATP binding site. Tyrosine 90 is a binding site for L-citrulline. Position 119 (glycine 119) interacts with ATP. L-aspartate-binding residues include threonine 121, asparagine 125, and aspartate 126. Asparagine 125 serves as a coordination point for L-citrulline. 5 residues coordinate L-citrulline: arginine 129, serine 178, serine 187, glutamate 263, and tyrosine 275.

Belongs to the argininosuccinate synthase family. Type 1 subfamily. Homotetramer.

Its subcellular location is the cytoplasm. The catalysed reaction is L-citrulline + L-aspartate + ATP = 2-(N(omega)-L-arginino)succinate + AMP + diphosphate + H(+). It participates in amino-acid biosynthesis; L-arginine biosynthesis; L-arginine from L-ornithine and carbamoyl phosphate: step 2/3. The chain is Argininosuccinate synthase from Legionella pneumophila (strain Corby).